The chain runs to 348 residues: Mitogen-activated protein kinase kinase 5 (348 aa).

Disordered stretches follow at residues 1 to 26 (MKPI…DLSL) and 35 to 54 (LAVP…PASS). Residue Ser6 is modified to Phosphoserine; by ASK7. Residues 70 to 325 (LERVNRIGSG…AQQLLQHPFI (256 aa)) enclose the Protein kinase domain. ATP is bound by residues 76 to 84 (IGSGAGGTV) and Lys99. Asp187 serves as the catalytic Proton acceptor. At Thr215 the chain carries Phosphothreonine. Residue Ser221 is modified to Phosphoserine; by ASK7. Ser221 is subject to Phosphoserine. Thr225 is modified (phosphothreonine; by ASK7). Arg313 carries the ADP-ribosylarginine; by HopF2 modification.

It belongs to the protein kinase superfamily. STE Ser/Thr protein kinase family. MAP kinase kinase subfamily. In terms of assembly, interacts with P.syringae type III effector HopF2. Interacts with BZR1. Interacts with MPK6 and MPK3. Interacts with RACK1A, RACK1B and RACK1C. Interacts with MAPKKK5 mainly in the cytosol. Binds to BASL. Interacts with MAPKKK20. Phosphorylation at Thr-215 and Ser-221 by MAP kinase kinase kinases positively regulates kinase activity. Phosphorylated by MAPKKK5 and MAPKKK20 in response to abscisic acid (ABA). Post-translationally, ADP-ribosylation at Arg-313 by P.syringae type III effector HopF2 reduces the ability of the protein to phosphorylate downstream MPK6. In terms of tissue distribution, expressed higher in stems and leaves than in flowers and roots.

The enzyme catalyses L-seryl-[protein] + ATP = O-phospho-L-seryl-[protein] + ADP + H(+). It carries out the reaction L-threonyl-[protein] + ATP = O-phospho-L-threonyl-[protein] + ADP + H(+). It catalyses the reaction L-tyrosyl-[protein] + ATP = O-phospho-L-tyrosyl-[protein] + ADP + H(+). With respect to regulation, activated through serine and threonine phosphorylation by MEKK1 and MAPKKK20 in response to abscisic acid (ABA). Inhibited through phosphorylation by GSK3/Shaggy-like kinase ASKs. Inhibited through ADP-Ribosylation by P.syringae HopF2. Activated after high light stress. Functionally, mitogen-activated protein kinase kinase (MAPKK) which regulates abscisic acid (ABA) responses in a MAPKKK20-MKK5-MPK6 cascade involved in root growth (e.g. root cell division and elongation) and stomatal response, probably via MAPK6 activation by protein phosphorylation. Involved in the second phase of hydrogen peroxide generation during hypersensitive response-like cell death. Involved in the innate immune MAP kinase signaling cascade (MEKK1, MKK4/MKK5 and MPK3/MPK6) downstream of bacterial flagellin receptor FLS2. Activates by phosphorylation the downstream MPK3 and MPK6. YDA-MKK4/MKK5-MPK3/MPK6 module regulates stomatal cell fate before the guard mother cell (GMC) is specified. This MAPK cascade also functions downstream of the ER receptor in regulating coordinated local cell proliferation, which shapes the morphology of plant organs. MKK4 and MKK5 participate in the regulation of floral organ abscission. Target of the Pseudomonas syringae type III effector HopF2, that inhibits the activation of the downstream MPK6 and PAMP-triggered immunity. Plays a critical role in high light stress tolerance by the mediation of the Cu/Zn SODs CSD1 and CSD2 gene expression. Phosphorylates BZR1 in vitro. In Arabidopsis thaliana (Mouse-ear cress), this protein is Mitogen-activated protein kinase kinase 5.